Reading from the N-terminus, the 138-residue chain is Large ribosomal subunit protein bL17 (138 aa).

The protein belongs to the bacterial ribosomal protein bL17 family. As to quaternary structure, part of the 50S ribosomal subunit. Contacts protein L32.

This chain is Large ribosomal subunit protein bL17, found in Nitrobacter hamburgensis (strain DSM 10229 / NCIMB 13809 / X14).